A 291-amino-acid chain; its full sequence is MPNNYVFSLQPTFTQGLILGQLSILVLLGMILKFLFLDSTQHPFESSSVDTDLLRRKRGLEPRHLPEELLHDNAESAEWFNVLLRQIVDVYRSKLRDGLPGIEGDEIARRRIENYANKIRPSGFLDHIEIHSVDLGVSAPELFNARVRQNAPSPAETEFDATYTDTLSLSLSTSYLFNYPMQSFARLPISLTISLSQFKSSICIIPPEITSPTPVLTISISPNFVLDLSTTSLMGSRAKLANVPKLHELIQHQVRRILAARATWKVVLPGLASVVDVKEEIKKEMSDADLS.

Residues 1–16 (MPNNYVFSLQPTFTQG) are Lumenal-facing. The chain crosses the membrane as a helical span at residues 17–37 (LILGQLSILVLLGMILKFLFL). Residues 38 to 291 (DSTQHPFESS…KKEMSDADLS (254 aa)) are Cytoplasmic-facing. An SMP-LTD domain is found at 73–277 (NAESAEWFNV…LPGLASVVDV (205 aa)).

It belongs to the MMM1 family. In terms of assembly, homodimer. Component of the ER-mitochondria encounter structure (ERMES) or MDM complex, composed of MMM1, MDM10, MDM12 and MDM34. An MMM1 homodimer associates with one molecule of MDM12 on each side in a pairwise head-to-tail manner, and the SMP-LTD domains of MMM1 and MDM12 generate a continuous hydrophobic tunnel for phospholipid trafficking.

The protein resides in the endoplasmic reticulum membrane. Functionally, component of the ERMES/MDM complex, which serves as a molecular tether to connect the endoplasmic reticulum (ER) and mitochondria. Components of this complex are involved in the control of mitochondrial shape and protein biogenesis, and function in nonvesicular lipid trafficking between the ER and mitochondria. The MDM12-MMM1 subcomplex functions in the major beta-barrel assembly pathway that is responsible for biogenesis of all outer membrane beta-barrel proteins, and acts in a late step after the SAM complex. The MDM10-MDM12-MMM1 subcomplex further acts in the TOM40-specific pathway after the action of the MDM12-MMM1 complex. Essential for establishing and maintaining the structure of mitochondria and maintenance of mtDNA nucleoids. In Laccaria bicolor (strain S238N-H82 / ATCC MYA-4686) (Bicoloured deceiver), this protein is Maintenance of mitochondrial morphology protein 1.